Reading from the N-terminus, the 1195-residue chain is DNA-directed RNA polymerase subunit Rpo2 (1195 aa).

Positions 894-909 are enriched in basic and acidic residues; sequence LEEGEERLGPQRRRES. The tract at residues 894-914 is disordered; that stretch reads LEEGEERLGPQRRRESSVTMR. Zn(2+)-binding residues include C1135, C1140, C1155, and C1158.

It belongs to the RNA polymerase beta chain family. As to quaternary structure, part of the RNA polymerase complex. Zn(2+) serves as cofactor.

It localises to the cytoplasm. The enzyme catalyses RNA(n) + a ribonucleoside 5'-triphosphate = RNA(n+1) + diphosphate. DNA-dependent RNA polymerase (RNAP) catalyzes the transcription of DNA into RNA using the four ribonucleoside triphosphates as substrates. This subunit is involved in DNA promoter recognition. This Thermoplasma acidophilum (strain ATCC 25905 / DSM 1728 / JCM 9062 / NBRC 15155 / AMRC-C165) protein is DNA-directed RNA polymerase subunit Rpo2.